The following is a 557-amino-acid chain: Potassium-transporting ATPase potassium-binding subunit (557 aa).

The next 12 helical transmembrane spans lie at 5-25, 63-83, 132-152, 170-190, 253-273, 283-303, 329-349, 356-376, 379-399, 416-436, 484-504, and 526-546; these read GFLLIATFLLVLMVLARPLGS, LSAILGLNILGLAVLFFMLLG, GLTVQNFLSAASGIAVIFALI, LLRITLWVLTPVALLIALFFI, FVQMLAIFLIPTALCFAFGEV, LLWAMSVIFVICVGVVMWAEV, VLVSSLFAVVTTAASCGAVIA, ALGGMVPMWLMQIGEVVFGGV, GLYGMMLFVLLAVFIAGLMIG, LTALAILVTPTLVLMGAALAM, LLALCMFVGRFGVIIPVMAIA, and LFVGLLIGTVLLVGALTFIPA.

It belongs to the KdpA family. The system is composed of three essential subunits: KdpA, KdpB and KdpC.

The protein localises to the cell inner membrane. Part of the high-affinity ATP-driven potassium transport (or Kdp) system, which catalyzes the hydrolysis of ATP coupled with the electrogenic transport of potassium into the cytoplasm. This subunit binds the periplasmic potassium ions and delivers the ions to the membrane domain of KdpB through an intramembrane tunnel. In Escherichia coli O6:K15:H31 (strain 536 / UPEC), this protein is Potassium-transporting ATPase potassium-binding subunit.